Reading from the N-terminus, the 264-residue chain is Fibroblast growth factor 5 (264 aa).

The signal sequence occupies residues 1 to 20; the sequence is MSLSLLFLIFCSHLIHSAWA. Residues 25-81 form a disordered region; it reads RLTPEGQPAPPRNPGDSSGSRGRSSATFSSSSASSPVAASPGSQGSGSEHSSFQWSP. The span at 38–72 shows a compositional bias: low complexity; that stretch reads PGDSSGSRGRSSATFSSSSASSPVAASPGSQGSGS. The N-linked (GlcNAc...) asparagine glycan is linked to asparagine 108. The disordered stretch occupies residues 227 to 254; the sequence is FTVTVPEKKKPPVKPKVPLSQPRRSPSP.

This sequence belongs to the heparin-binding growth factors family. As to quaternary structure, interacts with FGFR1 and FGFR2. Affinity between fibroblast growth factors (FGFs) and their receptors is increased by heparan sulfate glycosaminoglycans that function as coreceptors.

It localises to the secreted. In terms of biological role, plays an important role in the regulation of cell proliferation and cell differentiation. Required for normal regulation of the hair growth cycle. Functions as an inhibitor of hair elongation by promoting progression from anagen, the growth phase of the hair follicle, into catagen the apoptosis-induced regression phase. This Mus musculus (Mouse) protein is Fibroblast growth factor 5 (Fgf5).